Consider the following 236-residue polypeptide: Uridylate kinase (236 aa).

10 to 11 contributes to the ATP binding site; sequence GS. Glycine 44 contributes to the UMP binding site. Residues glycine 45 and arginine 49 each coordinate ATP. UMP-binding positions include aspartate 66 and 114 to 120; that span reads ITPGQTT. Residues threonine 140, tyrosine 146, and aspartate 149 each coordinate ATP.

It belongs to the UMP kinase family. In terms of assembly, homohexamer.

It is found in the cytoplasm. It carries out the reaction UMP + ATP = UDP + ADP. It participates in pyrimidine metabolism; CTP biosynthesis via de novo pathway; UDP from UMP (UMPK route): step 1/1. Inhibited by UTP. Its function is as follows. Catalyzes the reversible phosphorylation of UMP to UDP. The protein is Uridylate kinase of Methanospirillum hungatei JF-1 (strain ATCC 27890 / DSM 864 / NBRC 100397 / JF-1).